The chain runs to 505 residues: T-cell activation inhibitor, mitochondrial (505 aa).

Residues 216-243 (LKNSLPLRKELDRLKNELSELLQLSDIR) are a coiled coil.

Expressed in peripheral blood leukocytes, mainly in T-lymphocytes.

The protein localises to the mitochondrion. In terms of biological role, may regulate T-cell apoptosis. This Rattus norvegicus (Rat) protein is T-cell activation inhibitor, mitochondrial (Tcaim).